We begin with the raw amino-acid sequence, 221 residues long: Putative hemin import ATP-binding protein HrtA (221 aa).

In terms of domain architecture, ABC transporter spans 3 to 221 (LVVKDIVKNF…IELEDGKITD (219 aa)). 39-46 (GASGSGKT) contributes to the ATP binding site.

Belongs to the ABC transporter superfamily. HrtA family. The complex is composed of two ATP-binding proteins (HrtA), two transmembrane proteins (HrtB) and a solute-binding protein.

It localises to the cell membrane. Functionally, part of the ABC transporter complex hrt involved in hemin import. Responsible for energy coupling to the transport system. This is Putative hemin import ATP-binding protein HrtA (hrtA) from Staphylococcus aureus (strain MRSA252).